We begin with the raw amino-acid sequence, 311 residues long: Pyrimidine-specific ribonucleoside hydrolase RihA (311 aa).

The active site involves His-240.

Belongs to the IUNH family. RihA subfamily.

Hydrolyzes with equal efficiency cytidine or uridine to ribose and cytosine or uracil, respectively. This Escherichia fergusonii (strain ATCC 35469 / DSM 13698 / CCUG 18766 / IAM 14443 / JCM 21226 / LMG 7866 / NBRC 102419 / NCTC 12128 / CDC 0568-73) protein is Pyrimidine-specific ribonucleoside hydrolase RihA.